Consider the following 497-residue polypeptide: uncharacterized protein (497 aa).

The span at 44 to 74 shows a compositional bias: basic and acidic residues; it reads IRQEKEMKRHDDDGRQYQSDRKFAKSKHDDI. Disordered regions lie at residues 44-95, 120-151, and 195-227; these read IRQE…SVGR, VSRS…EHRD, and GNVI…TSAR. Residues 120–131 are compositionally biased toward low complexity; the sequence is VSRSSSIGHSGS. Phosphoserine is present on residues Ser123, Ser125, and Ser131. Thr132 bears the Phosphothreonine mark. The span at 213 to 227 shows a compositional bias: low complexity; sequence ASLSRAASNSSTSAR. Residue Thr258 is modified to Phosphothreonine. At Ser310 the chain carries Phosphoserine. The span at 367 to 385 shows a compositional bias: polar residues; sequence NVNPSNQDLASVKQPSGFS. The tract at residues 367-497 is disordered; that stretch reads NVNPSNQDLA…GFPDTSRPPH (131 aa). Residues 400-409 show a composition bias toward low complexity; sequence NFSNDDSSFF. Ser436 is modified (phosphoserine). Residues 448-472 are compositionally biased toward low complexity; the sequence is GLSSGASIPSAPPGFGYQQPSFPYS.

Its subcellular location is the cytoplasm. It localises to the nucleus. This is an uncharacterized protein from Schizosaccharomyces pombe (strain 972 / ATCC 24843) (Fission yeast).